The sequence spans 290 residues: Appressorium protein ROW2 (290 aa).

The N-terminal stretch at 1 to 19 (MFTKSVFIALVAGVLGVTA) is a signal peptide. The segment at 266–290 (AIKTPSKRSVMATHVKRSPEWEEEP) is disordered.

It is found in the secreted. Its subcellular location is the nucleus. Functionally, plays a role in the formation of the appressorium, a specialized infection structure with the purpose of penetrating the host surface, and is required for proper remodeling of the appressorium wall and vesicle secretion. This is Appressorium protein ROW2 from Mycosarcoma maydis (Corn smut fungus).